A 603-amino-acid chain; its full sequence is MFSKSDFRGIINSMGLVFGDIGTSPIYTLTVIFLLTRPTEVHVIGVLSLIIWTLITLVTVEYAWLAMSLGKKGEGGTIVLKELLVPLIKSGRNAAFITLLAYIGVSFLVGDGVITPAISILSAVEGLRIIPDFQDIGQGAIMFIAGIIAVALFSVQSKGTEEITWVFGPVMVLWFASLAFSGIASIFYTPGVLRAINPYYAISFLLHNGFTGFFVLSEVILCATGGEALYADMGHLGREPILKAWRLVFSALVLNYLGQGAFIIRNPESKNILFEMINQQAEVIYIPFLILSITATIIASQAMISGMFSIVYQGITTRIIPMLKIDYTSGKLRSQIYIGAVNWLLLISVLFMIFEFRDSHRLAAAYGLAVTGTMSITGLMMTLIFYLKGRMFRSFVSLFVTVIDVVFLLSNTYKIPHGGYWSIVIAAIAFSLIIIYTSGQKKLYELMNPMKIGDFLEKYKQVYASENKISGTALFFARDINYVPRYISNVMFENNIIYEDNIFISIIKCESPFGVKSSFAKDLAKGLRVFEINVGYMEVIDVVQILKDKGIQEKTIFYGIEDILTSNLIWKVFSVIKKLSPSFVQFYKLPSDKLHGVLTRFEM.

The next 12 helical transmembrane spans lie at 15–35, 43–63, 94–114, 136–156, 163–183, 201–221, 244–264, 284–304, 336–356, 367–387, 391–411, and 415–435; these read GLVFGDIGTSPIYTLTVIFLL, VIGVLSLIIWTLITLVTVEYA, AAFITLLAYIGVSFLVGDGVI, IGQGAIMFIAGIIAVALFSVQ, ITWVFGPVMVLWFASLAFSGI, AISFLLHNGFTGFFVLSEVIL, AWRLVFSALVLNYLGQGAFII, IYIPFLILSITATIIASQAMI, IYIGAVNWLLLISVLFMIFEF, GLAVTGTMSITGLMMTLIFYL, MFRSFVSLFVTVIDVVFLLSN, and IPHGGYWSIVIAAIAFSLIII.

It belongs to the HAK/KUP transporter (TC 2.A.72) family.

It localises to the cell membrane. The enzyme catalyses K(+)(in) + H(+)(in) = K(+)(out) + H(+)(out). Its function is as follows. Transport of potassium into the cell. Likely operates as a K(+):H(+) symporter. The sequence is that of Probable potassium transport system protein Kup from Methanosarcina acetivorans (strain ATCC 35395 / DSM 2834 / JCM 12185 / C2A).